A 407-amino-acid polypeptide reads, in one-letter code: Subtilisin-like protease CPC735_013710 (407 aa).

The first 17 residues, 1–17 (MQLLNLSLFFLLPFATA), serve as a signal peptide directing secretion. The propeptide occupies 18 to 115 (NPIPQDSQNI…VLPDQKIYLA (98 aa)). Residues 31-114 (QYIVTLKDGL…SVLPDQKIYL (84 aa)) enclose the Inhibitor I9 domain. The 284-residue stretch at 124 to 407 (GWNLGYMSSK…VAYNGIQEML (284 aa)) folds into the Peptidase S8 domain. Asparagine 145 is a glycosylation site (N-linked (GlcNAc...) asparagine). Residues aspartate 162 and histidine 194 each act as charge relay system in the active site. N-linked (GlcNAc...) asparagine glycans are attached at residues asparagine 241, asparagine 254, and asparagine 341. Catalysis depends on serine 350, which acts as the Charge relay system. Residue asparagine 381 is glycosylated (N-linked (GlcNAc...) asparagine).

It belongs to the peptidase S8 family.

The protein resides in the secreted. In terms of biological role, secreted subtilisin-like serine protease with keratinolytic activity that contributes to pathogenicity. This Coccidioides posadasii (strain C735) (Valley fever fungus) protein is Subtilisin-like protease CPC735_013710.